The following is an 89-amino-acid chain: Acylphosphatase (89 aa).

The Acylphosphatase-like domain maps to 3–89 (RMTAWVHGFV…RGDLTGFVER (87 aa)). Catalysis depends on residues Arg-18 and Asn-36.

This sequence belongs to the acylphosphatase family.

The catalysed reaction is an acyl phosphate + H2O = a carboxylate + phosphate + H(+). In Rhodococcus jostii (strain RHA1), this protein is Acylphosphatase (acyP).